The primary structure comprises 366 residues: Peptide chain release factor 2 (366 aa).

Glutamine 253 is modified (N5-methylglutamine).

This sequence belongs to the prokaryotic/mitochondrial release factor family. Post-translationally, methylated by PrmC. Methylation increases the termination efficiency of RF2.

It is found in the cytoplasm. Peptide chain release factor 2 directs the termination of translation in response to the peptide chain termination codons UGA and UAA. The polypeptide is Peptide chain release factor 2 (prfB) (Buchnera aphidicola subsp. Baizongia pistaciae (strain Bp)).